The primary structure comprises 146 residues: Large ribosomal subunit protein bL21 (146 aa).

The segment at 96 to 146 is disordered; sequence KKKTRRKMGHRQELTRVMVKSISITNSTPKTSSKTEVKKKSTSPKASNPEN.

Belongs to the bacterial ribosomal protein bL21 family. As to quaternary structure, part of the 50S ribosomal subunit. Contacts protein L20.

Functionally, this protein binds to 23S rRNA in the presence of protein L20. This Prochlorococcus marinus subsp. pastoris (strain CCMP1986 / NIES-2087 / MED4) protein is Large ribosomal subunit protein bL21.